Consider the following 256-residue polypeptide: Thiazole synthase (256 aa).

The active-site Schiff-base intermediate with DXP is the Lys-96. Residues Gly-157, 183 to 184 (AG), and 205 to 206 (NT) each bind 1-deoxy-D-xylulose 5-phosphate.

Belongs to the ThiG family. Homotetramer. Forms heterodimers with either ThiH or ThiS.

The protein localises to the cytoplasm. It carries out the reaction [ThiS sulfur-carrier protein]-C-terminal-Gly-aminoethanethioate + 2-iminoacetate + 1-deoxy-D-xylulose 5-phosphate = [ThiS sulfur-carrier protein]-C-terminal Gly-Gly + 2-[(2R,5Z)-2-carboxy-4-methylthiazol-5(2H)-ylidene]ethyl phosphate + 2 H2O + H(+). It functions in the pathway cofactor biosynthesis; thiamine diphosphate biosynthesis. Catalyzes the rearrangement of 1-deoxy-D-xylulose 5-phosphate (DXP) to produce the thiazole phosphate moiety of thiamine. Sulfur is provided by the thiocarboxylate moiety of the carrier protein ThiS. In vitro, sulfur can be provided by H(2)S. This chain is Thiazole synthase, found in Bacillus anthracis.